The primary structure comprises 586 residues: NADH-quinone oxidoreductase subunit C/D 2 (586 aa).

Positions 1-173 (MKWVNKGTVE…RTDPPSHDFE (173 aa)) are NADH dehydrogenase I subunit C. Positions 197 to 586 (AELVLNWGPL…LDPVVGETDR (390 aa)) are NADH dehydrogenase I subunit D.

The protein in the N-terminal section; belongs to the complex I 30 kDa subunit family. It in the C-terminal section; belongs to the complex I 49 kDa subunit family. In terms of assembly, NDH-1 is composed of 13 different subunits. Subunits NuoB, CD, E, F, and G constitute the peripheral sector of the complex.

The protein resides in the cell inner membrane. It catalyses the reaction a quinone + NADH + 5 H(+)(in) = a quinol + NAD(+) + 4 H(+)(out). In terms of biological role, NDH-1 shuttles electrons from NADH, via FMN and iron-sulfur (Fe-S) centers, to quinones in the respiratory chain. The immediate electron acceptor for the enzyme in this species is believed to be ubiquinone. Couples the redox reaction to proton translocation (for every two electrons transferred, four hydrogen ions are translocated across the cytoplasmic membrane), and thus conserves the redox energy in a proton gradient. The sequence is that of NADH-quinone oxidoreductase subunit C/D 2 (nuoC2) from Aquifex aeolicus (strain VF5).